A 401-amino-acid chain; its full sequence is Deoxyhypusine synthase-like protein (401 aa).

It belongs to the deoxyhypusine synthase family.

This Thermosynechococcus vestitus (strain NIES-2133 / IAM M-273 / BP-1) protein is Deoxyhypusine synthase-like protein.